Reading from the N-terminus, the 224-residue chain is Glutamate/aspartate import permease protein GltK (224 aa).

Residues 1-19 (MYEFDWSSIVPSLPYLLDG) are Periplasmic-facing. A helical transmembrane segment spans residues 20 to 40 (LVITLKITVTAVVIGILWGTM). Residues 20–216 (LVITLKITVT…VISLSASLLV (197 aa)) form the ABC transmembrane type-1 domain. The Cytoplasmic segment spans residues 41 to 67 (LAVMRLSSFAPVAWFAKAYVNVFRSIP). A helical transmembrane segment spans residues 68–88 (LVMVLLWFYLIVPGFLQNVLG). Topologically, residues 89 to 94 (LSPKND) are periplasmic. A helical transmembrane segment spans residues 95–112 (IRLISAMVAFSMFEAAYY). The Cytoplasmic portion of the chain corresponds to 113–154 (SEIIRAGIQSISRGQSSAALALGMTHWQSMKLIILPQAFRAM). A helical transmembrane segment spans residues 155-175 (VPLLLTQGIVLFQDTSLVYVL). The Periplasmic segment spans residues 176–196 (SLADFFRTASTIGERDGTQVE). The helical transmembrane segment at 197 to 217 (MILFAGFVYFVISLSASLLVS) threads the bilayer. The Cytoplasmic portion of the chain corresponds to 218 to 224 (YLKRRTA).

It belongs to the binding-protein-dependent transport system permease family. HisMQ subfamily. The complex is composed of two ATP-binding proteins (GltL), two transmembrane proteins (GltJ and GltK) and a solute-binding protein (GltI).

The protein localises to the cell inner membrane. In terms of biological role, part of the ABC transporter complex GltIJKL involved in glutamate and aspartate uptake. Probably responsible for the translocation of the substrate across the membrane. In Escherichia coli O157:H7, this protein is Glutamate/aspartate import permease protein GltK (gltK).